The following is a 398-amino-acid chain: Acetate kinase (398 aa).

Asn-8 provides a ligand contact to Mg(2+). An ATP-binding site is contributed by Lys-15. Arg-89 is a binding site for substrate. The Proton donor/acceptor role is filled by Asp-146. Residues 206 to 210 (HIGNG), 283 to 285 (DMR), and 331 to 335 (GMGEN) contribute to the ATP site. Glu-383 is a Mg(2+) binding site.

The protein belongs to the acetokinase family. Homodimer. Mg(2+) serves as cofactor. Requires Mn(2+) as cofactor.

The protein resides in the cytoplasm. It carries out the reaction acetate + ATP = acetyl phosphate + ADP. It participates in metabolic intermediate biosynthesis; acetyl-CoA biosynthesis; acetyl-CoA from acetate: step 1/2. Functionally, catalyzes the formation of acetyl phosphate from acetate and ATP. Can also catalyze the reverse reaction. In Streptococcus pyogenes serotype M2 (strain MGAS10270), this protein is Acetate kinase.